A 498-amino-acid polypeptide reads, in one-letter code: ATP synthase subunit beta, chloroplastic (498 aa).

172-179 (GGAGVGKT) serves as a coordination point for ATP.

Belongs to the ATPase alpha/beta chains family. As to quaternary structure, F-type ATPases have 2 components, CF(1) - the catalytic core - and CF(0) - the membrane proton channel. CF(1) has five subunits: alpha(3), beta(3), gamma(1), delta(1), epsilon(1). CF(0) has four main subunits: a(1), b(1), b'(1) and c(9-12).

The protein localises to the plastid. The protein resides in the chloroplast thylakoid membrane. It catalyses the reaction ATP + H2O + 4 H(+)(in) = ADP + phosphate + 5 H(+)(out). Functionally, produces ATP from ADP in the presence of a proton gradient across the membrane. The catalytic sites are hosted primarily by the beta subunits. In Gossypium barbadense (Sea Island cotton), this protein is ATP synthase subunit beta, chloroplastic.